The chain runs to 61 residues: MLSVQLITPSSHGTAHLPRDDTDAAAGEILEFLCPFFCIGGIGDEYCDCQEKRDLDLFTDQ.

2 propeptides span residues 1–19 (MLSV…HLPR) and 52–61 (KRDLDLFTDQ).

Post-translationally, mostly non-hydroxylated. In terms of processing, contains 2 disulfide bonds. As to expression, expressed by the venom duct.

It is found in the secreted. Its function is as follows. Probable toxin that inhibits ion channels. This chain is Conotoxin Am14.1, found in Conus amadis (Amadis cone).